Consider the following 513-residue polypeptide: MSASVVLQPGQVTLAQWRALYRGAEVTLDPACAQAVLRSAQTVEAIVARGEPVYGVNTGFGKLASVRIERDDLQTLQRNIVLSHAAGVGDPTPVPVVRLMMALKLTSLAQGASGIQPDTLALLEAMLRQGITPVVPCQGSVGASGDLAPLSHLAAVMIGVGEAFVGDQRLPAADALARAQLQPRVLGAKEGLALLNGTQFSTACALAGLFEIETVLQAALVTGALSVEAAKGSDTPFDARIHALRGQPGQIATAAALRALMAESAIRESHRLGDVRVQDPYCLRCQPQVMGAALDVMRQAARTLEIEANGVSDNPLVFSDTGEALSGGNFHAEPVAFAADMLALAVCEIGSISERRTAMLVDPALSGLPAFLTPRPGLNSGFMIPQVTAAALVSENKQCAYPASVDSIPTSANQEDHVSMAAHGARRLLAMADNAAHVIGIELLAAVQGCDFHAPLRSSAALEAARALLRAQVPTLQDDRYFHPDMLAASALVRSGALATAVGIVLPGVELSA.

Residues 143–145 constitute a cross-link (5-imidazolinone (Ala-Gly)); it reads ASG. Ser144 is subject to 2,3-didehydroalanine (Ser).

Belongs to the PAL/histidase family. Post-translationally, contains an active site 4-methylidene-imidazol-5-one (MIO), which is formed autocatalytically by cyclization and dehydration of residues Ala-Ser-Gly.

It localises to the cytoplasm. The enzyme catalyses L-histidine = trans-urocanate + NH4(+). Its pathway is amino-acid degradation; L-histidine degradation into L-glutamate; N-formimidoyl-L-glutamate from L-histidine: step 1/3. This is Histidine ammonia-lyase from Xanthomonas campestris pv. campestris (strain B100).